The following is a 487-amino-acid chain: UDP-N-acetylmuramate--L-alanine ligase (487 aa).

122 to 128 (GTHGKTS) lines the ATP pocket.

The protein belongs to the MurCDEF family.

It localises to the cytoplasm. It catalyses the reaction UDP-N-acetyl-alpha-D-muramate + L-alanine + ATP = UDP-N-acetyl-alpha-D-muramoyl-L-alanine + ADP + phosphate + H(+). Its pathway is cell wall biogenesis; peptidoglycan biosynthesis. Its function is as follows. Cell wall formation. In Corynebacterium urealyticum (strain ATCC 43042 / DSM 7109), this protein is UDP-N-acetylmuramate--L-alanine ligase.